The primary structure comprises 182 residues: Crossover junction endodeoxyribonuclease RuvC (182 aa).

Residues aspartate 7, glutamate 67, and aspartate 139 contribute to the active site. Positions 7, 67, and 139 each coordinate Mg(2+).

It belongs to the RuvC family. In terms of assembly, homodimer which binds Holliday junction (HJ) DNA. The HJ becomes 2-fold symmetrical on binding to RuvC with unstacked arms; it has a different conformation from HJ DNA in complex with RuvA. In the full resolvosome a probable DNA-RuvA(4)-RuvB(12)-RuvC(2) complex forms which resolves the HJ. Mg(2+) is required as a cofactor.

The protein resides in the cytoplasm. The catalysed reaction is Endonucleolytic cleavage at a junction such as a reciprocal single-stranded crossover between two homologous DNA duplexes (Holliday junction).. Functionally, the RuvA-RuvB-RuvC complex processes Holliday junction (HJ) DNA during genetic recombination and DNA repair. Endonuclease that resolves HJ intermediates. Cleaves cruciform DNA by making single-stranded nicks across the HJ at symmetrical positions within the homologous arms, yielding a 5'-phosphate and a 3'-hydroxyl group; requires a central core of homology in the junction. The consensus cleavage sequence is 5'-(A/T)TT(C/G)-3'. Cleavage occurs on the 3'-side of the TT dinucleotide at the point of strand exchange. HJ branch migration catalyzed by RuvA-RuvB allows RuvC to scan DNA until it finds its consensus sequence, where it cleaves and resolves the cruciform DNA. The chain is Crossover junction endodeoxyribonuclease RuvC from Bordetella petrii (strain ATCC BAA-461 / DSM 12804 / CCUG 43448).